Consider the following 131-residue polypeptide: Aspartate 1-decarboxylase (131 aa).

Catalysis depends on S25, which acts as the Schiff-base intermediate with substrate; via pyruvic acid. A Pyruvic acid (Ser) modification is found at S25. T57 provides a ligand contact to substrate. Y58 functions as the Proton donor in the catalytic mechanism. G73–A75 contributes to the substrate binding site.

Belongs to the PanD family. As to quaternary structure, heterooctamer of four alpha and four beta subunits. Pyruvate serves as cofactor. In terms of processing, is synthesized initially as an inactive proenzyme, which is activated by self-cleavage at a specific serine bond to produce a beta-subunit with a hydroxyl group at its C-terminus and an alpha-subunit with a pyruvoyl group at its N-terminus.

The protein localises to the cytoplasm. The enzyme catalyses L-aspartate + H(+) = beta-alanine + CO2. It participates in cofactor biosynthesis; (R)-pantothenate biosynthesis; beta-alanine from L-aspartate: step 1/1. Its function is as follows. Catalyzes the pyruvoyl-dependent decarboxylation of aspartate to produce beta-alanine. The chain is Aspartate 1-decarboxylase from Anaeromyxobacter dehalogenans (strain 2CP-C).